We begin with the raw amino-acid sequence, 902 residues long: Cytosolic 10-formyltetrahydrofolate dehydrogenase (902 aa).

Residues 1–310 are hydrolase domain; sequence MKIAVIGQSL…PASQFFKGSA (310 aa). Serine 9 bears the Phosphoserine mark. Residue lysine 38 is modified to N6-succinyllysine. 88–90 is a binding site for (6R)-10-formyltetrahydrofolate; sequence QFI. Histidine 106 (proton donor) is an active-site residue. Residue aspartate 142 participates in (6R)-10-formyltetrahydrofolate binding. A Carrier domain is found at 318–395; it reads EEELATAEAV…DFIQLLVRKL (78 aa). Serine 354 is subject to O-(pantetheine 4'-phosphoryl)serine. An aldehyde dehydrogenase domain region spans residues 417-902; sequence TLQMPYQLFI…LRIKTVTFEY (486 aa). NADP(+) is bound by residues 571 to 573 and 597 to 600; these read IPW and KPAQ. A phosphoserine mark is found at serine 629 and serine 631. NADP(+) contacts are provided by residues 630 to 635 and 650 to 651; these read GSLVGQ and GS. Lysine 660 bears the N6-succinyllysine mark. Residue glutamate 673 is the Proton acceptor of the active site. 673–674 provides a ligand contact to NADP(+); the sequence is EL. Cysteine 707 (proton donor) is an active-site residue. Lysine 757 is a binding site for NADP(+). Position 767 is an N6-succinyllysine (lysine 767). Position 804-806 (804-806) interacts with NADP(+); that stretch reads ESF. Phosphoserine is present on serine 825. At lysine 882 the chain carries N6-acetyllysine.

The protein in the N-terminal section; belongs to the GART family. In the C-terminal section; belongs to the aldehyde dehydrogenase family. ALDH1L subfamily. In terms of assembly, homotetramer. Phosphopantetheinylation at Ser-354 by AASDHPPT is required for the formyltetrahydrofolate dehydrogenase activity. As to expression, highly expressed in liver (at protein level). Also expressed in pancreas, brain and lung (at protein level).

The protein localises to the cytoplasm. It is found in the cytosol. The enzyme catalyses (6R)-10-formyltetrahydrofolate + NADP(+) + H2O = (6S)-5,6,7,8-tetrahydrofolate + CO2 + NADPH + H(+). Functionally, cytosolic 10-formyltetrahydrofolate dehydrogenase that catalyzes the NADP(+)-dependent conversion of 10-formyltetrahydrofolate to tetrahydrofolate and carbon dioxide. May also have an NADP(+)-dependent aldehyde dehydrogenase activity towards formaldehyde, acetaldehyde, propionaldehyde, and benzaldehyde. The chain is Cytosolic 10-formyltetrahydrofolate dehydrogenase from Mus musculus (Mouse).